The chain runs to 853 residues: Rod cGMP-specific 3',5'-cyclic phosphodiesterase subunit beta (853 aa).

Position 2 is an N-acetylserine (Ser2). GAF domains are found at residues 71 to 220 and 252 to 429; these read NMER…TLNL and DIER…GWSV. The PDEase domain occupies 481–814; sequence EEDELGKILK…KEWKALADEY (334 aa). His557 functions as the Proton donor in the catalytic mechanism. 4 residues coordinate a divalent metal cation: His561, His597, Asp598, and Asp718. Position 850 is a cysteine methyl ester (Cys850). The S-geranylgeranyl cysteine moiety is linked to residue Cys850. Positions 851–853 are cleaved as a propeptide — removed in mature form; sequence RIL.

It belongs to the cyclic nucleotide phosphodiesterase family. As to quaternary structure, oligomer composed of two catalytic chains (alpha and beta), an inhibitory chain (gamma) and the delta chain. It depends on a divalent metal cation as a cofactor.

It localises to the membrane. Its subcellular location is the cell projection. The protein resides in the cilium. It is found in the photoreceptor outer segment. The enzyme catalyses 3',5'-cyclic GMP + H2O = GMP + H(+). Necessary for the formation of a functional phosphodiesterase holoenzyme. Involved in retinal circadian rhythm photoentrainment via modulation of UVA and orange light-induced phase-shift of the retina clock. May participate in processes of transmission and amplification of the visual signal. Its function is as follows. Rod-specific cGMP phosphodiesterase that catalyzes the hydrolysis of 3',5'-cyclic GMP. Necessary for the formation of a functional phosphodiesterase holoenzyme. Involved in retinal circadian rhythm photoentrainment via modulation of UVA and orange light-induced phase-shift of the retina clock. May participate in processes of transmission and amplification of the visual signal. This chain is Rod cGMP-specific 3',5'-cyclic phosphodiesterase subunit beta (PDE6B), found in Bos taurus (Bovine).